Reading from the N-terminus, the 90-residue chain is Sakacin-A immunity factor (90 aa).

Imparts immunity to sakacin-A to naturally sensitive host strains. This is Sakacin-A immunity factor (saiA) from Latilactobacillus sakei (Lactobacillus sakei).